The chain runs to 229 residues: UPF0758 protein Mbur_0382 (229 aa).

The 123-residue stretch at 106–228 (KIRSANDVYS…YVSLKEEGYI (123 aa)) folds into the MPN domain. Zn(2+) is bound by residues His-177, His-179, and Asp-190. The JAMM motif motif lies at 177-190 (HNHPSGDPAPSRED).

The protein belongs to the UPF0758 family.

The sequence is that of UPF0758 protein Mbur_0382 from Methanococcoides burtonii (strain DSM 6242 / NBRC 107633 / OCM 468 / ACE-M).